Reading from the N-terminus, the 232-residue chain is 6-phosphogluconolactonase (232 aa).

Belongs to the glucosamine/galactosamine-6-phosphate isomerase family. 6-phosphogluconolactonase subfamily.

The enzyme catalyses 6-phospho-D-glucono-1,5-lactone + H2O = 6-phospho-D-gluconate + H(+). Its pathway is carbohydrate degradation; pentose phosphate pathway; D-ribulose 5-phosphate from D-glucose 6-phosphate (oxidative stage): step 2/3. Its function is as follows. Hydrolysis of 6-phosphogluconolactone to 6-phosphogluconate. The chain is 6-phosphogluconolactonase (pgl) from Aggregatibacter actinomycetemcomitans (Actinobacillus actinomycetemcomitans).